A 263-amino-acid chain; its full sequence is Imidazole glycerol phosphate synthase subunit HisF (263 aa).

Active-site residues include aspartate 11 and aspartate 130.

The protein belongs to the HisA/HisF family. As to quaternary structure, heterodimer of HisH and HisF.

It localises to the cytoplasm. The catalysed reaction is 5-[(5-phospho-1-deoxy-D-ribulos-1-ylimino)methylamino]-1-(5-phospho-beta-D-ribosyl)imidazole-4-carboxamide + L-glutamine = D-erythro-1-(imidazol-4-yl)glycerol 3-phosphate + 5-amino-1-(5-phospho-beta-D-ribosyl)imidazole-4-carboxamide + L-glutamate + H(+). It functions in the pathway amino-acid biosynthesis; L-histidine biosynthesis; L-histidine from 5-phospho-alpha-D-ribose 1-diphosphate: step 5/9. Its function is as follows. IGPS catalyzes the conversion of PRFAR and glutamine to IGP, AICAR and glutamate. The HisF subunit catalyzes the cyclization activity that produces IGP and AICAR from PRFAR using the ammonia provided by the HisH subunit. The sequence is that of Imidazole glycerol phosphate synthase subunit HisF from Synechococcus sp. (strain CC9311).